Consider the following 475-residue polypeptide: FAD-dependent monooxygenase sdgC (475 aa).

An N-terminal signal peptide occupies residues 1 to 23; it reads MDKRSFKVIVVGGSIAGLTLAHS. Positions 35, 49, and 126 each coordinate FAD. Asn236 is a glycosylation site (N-linked (GlcNAc...) asparagine). Ala330 is a binding site for FAD. The chain crosses the membrane as a helical span at residues 446–466; it reads ISGVLLLVIPIIALVYGYSVI.

The protein belongs to the paxM FAD-dependent monooxygenase family. The cofactor is FAD.

The protein localises to the membrane. Its pathway is secondary metabolite biosynthesis. FAD-dependent monooxygenase; part of the gene cluster that mediates the biosynthesis of the polyenes aspernidgulenes. The carbon backbone of aspernidgulenes is synthesized by the HR-PKS sdgA, which accepts acetyl-CoA as the starter unit and performs malonyl-CoA extensions as well as regioselective methylation and reduction. The resulting nonaketide offloads the HR-PKS by intramolecular lactonization to yield the 5,6-dihydro-alpha-pyrone-containing hexaenoic acids preaspernidgulene A1 and A2. The FAD-dependent monooxygenase sdgC then installs the first epoxide on the penultimate double bond. Subsequently, the FAD-dependent monooxygenase sdgF presumably generates a ketone intermediate through Meinwald rearrangement involving a hydride shift. Next, sdgC introduces another epoxide on the last olefin of the ketone intermediate after E/Z isomerization. The epoxide hydrolase sdgD then catalyzes stereospecific cyclization of the 5,6-dihydro-alpha-pyrone and opening of the epoxide ring to form an oxygenated trimethylcyclopentanone and an oxabicyclo[2.2.1]heptane unit. Finally, the bicyclic unit undergoes hydrolytic cleavage, either spontaneously or catalyzed by sdgD, to assemble the dimethyl-gamma-lactone moiety in aspernidgulene A1. The polypeptide is FAD-dependent monooxygenase sdgC (Emericella nidulans (strain FGSC A4 / ATCC 38163 / CBS 112.46 / NRRL 194 / M139) (Aspergillus nidulans)).